Here is a 146-residue protein sequence, read N- to C-terminus: UPF0306 protein CKO_04548 (146 aa).

Belongs to the UPF0306 family.

The polypeptide is UPF0306 protein CKO_04548 (Citrobacter koseri (strain ATCC BAA-895 / CDC 4225-83 / SGSC4696)).